A 648-amino-acid chain; its full sequence is Zinc finger protein grt1 (648 aa).

The segment at residues 13-42 is a DNA-binding region (zn(2)-C6 fungal-type); that stretch reads ACENCRKRKVKCSGGDVCFECQKYNENCVY.

Monomer.

Its subcellular location is the nucleus. May be involved in the facilitation of anaphase progression in mitosis. In Schizosaccharomyces pombe (strain 972 / ATCC 24843) (Fission yeast), this protein is Zinc finger protein grt1 (grt1).